The chain runs to 245 residues: MKTEGRQMPHKSTILPFLIKFAPNSPQFTYDCDQCLNVYAFDLDHTIIKPKSPNAKYSRSANDWQFMNFDSKKSTLDYLFSITDNDLAAVIVIFSNQGGVITVPRTSKSCSKYINKISLFLKAIENDKRGEKLSPRLWIYAAPKRPKTVVTNNKKITFPSLCKSYNNDPEIFEKVRKPMTGMADFFRIDITDACRVLKTVPPIKLNWVYYCGDAAGRKNDFSDSDIKFAEKLHVEFKYPEEVFQG.

It belongs to the DNA 3' phosphatase family.

It is found in the nucleus. It catalyses the reaction a 3'end (2'-deoxyribonucleotide 3'-phosphate)-DNA + H2O = a 3'-end 2'-deoxyribonucleotide-DNA + phosphate. Its function is as follows. Dephosphorylate DNA's 3'-phosphate termini. Has a role in the repair of breaks in single-stranded DNA. The sequence is that of Polynucleotide 3'-phosphatase (TPP1) from Saccharomyces mikatae (Yeast).